The primary structure comprises 158 residues: UPF0266 membrane protein YobD (158 aa).

Helical transmembrane passes span 6–26 (LVLILFIAALLAFAIYDQFIM), 45–65 (IDSVIFVGLIVILIYNNVTNH), and 67–87 (ALITTWLLSALALMGFYIFWI).

Belongs to the UPF0266 family.

The protein resides in the cell inner membrane. This chain is UPF0266 membrane protein YobD, found in Shigella boydii serotype 4 (strain Sb227).